The sequence spans 248 residues: Ubiquinone/menaquinone biosynthesis C-methyltransferase UbiE (248 aa).

2 residues coordinate S-adenosyl-L-methionine: Ser68 and Asp92.

The protein belongs to the class I-like SAM-binding methyltransferase superfamily. MenG/UbiE family.

The catalysed reaction is a 2-demethylmenaquinol + S-adenosyl-L-methionine = a menaquinol + S-adenosyl-L-homocysteine + H(+). It carries out the reaction a 2-methoxy-6-(all-trans-polyprenyl)benzene-1,4-diol + S-adenosyl-L-methionine = a 5-methoxy-2-methyl-3-(all-trans-polyprenyl)benzene-1,4-diol + S-adenosyl-L-homocysteine + H(+). The protein operates within quinol/quinone metabolism; menaquinone biosynthesis; menaquinol from 1,4-dihydroxy-2-naphthoate: step 2/2. It participates in cofactor biosynthesis; ubiquinone biosynthesis. In terms of biological role, methyltransferase required for the conversion of demethylmenaquinol (DMKH2) to menaquinol (MKH2) and the conversion of 2-polyprenyl-6-methoxy-1,4-benzoquinol (DDMQH2) to 2-polyprenyl-3-methyl-6-methoxy-1,4-benzoquinol (DMQH2). This Rickettsia rickettsii (strain Iowa) protein is Ubiquinone/menaquinone biosynthesis C-methyltransferase UbiE.